The primary structure comprises 282 residues: Aquaporin-6 (282 aa).

The Cytoplasmic segment spans residues 1–25; sequence MDAVEPGGRGWASMLACRLWKAISR. The helical transmembrane segment at 26 to 46 threads the bilayer; the sequence is ALFAEFLATGLYVFFGVGSVM. Over 47 to 54 the chain is Extracellular; sequence RWPTALPS. A helical membrane pass occupies residues 55–73; it reads VLQIAITFNLVTAMAVQVT. Over 74–78 the chain is Cytoplasmic; the sequence is WKASG. Positions 79-88 form an intramembrane region, discontinuously helical; that stretch reads AHANPAVTLA. Residues 82–84 carry the NPA 1 motif; it reads NPA. The Cytoplasmic portion of the chain corresponds to 89-99; sequence FLVGSHISLPR. Residues 100 to 121 traverse the membrane as a helical segment; that stretch reads AVAYVAAQLVGATVGAALLYGV. At 122 to 141 the chain is on the extracellular side; sequence MPGDIRETLGINVVRNSVST. A helical membrane pass occupies residues 142 to 162; the sequence is GQAVAVELLLTLQLVLCVFAS. Topologically, residues 163 to 168 are cytoplasmic; that stretch reads TDSRQT. Residues 169-188 form a helical membrane-spanning segment; the sequence is SGSPATMIGISVALGHLIGI. At 189 to 192 the chain is on the extracellular side; it reads HFTG. An intramembrane region (discontinuously helical) is located at residues 193 to 205; that stretch reads CSMNPARSFGPAI. The short motif at 196 to 198 is the NPA 2 element; it reads NPA. Over 206–213 the chain is Extracellular; that stretch reads IIGKFTVH. Residues 214 to 234 traverse the membrane as a helical segment; it reads WVFWVGPLMGALLASLIYNFV. Over 235–282 the chain is Cytoplasmic; the sequence is LFPDTKTLAQRLAILTGTVEVGTGAGAGAEPLKKESQPGSGAVEMESV. A disordered region spans residues 260–282; the sequence is GAGAEPLKKESQPGSGAVEMESV.

It belongs to the MIP/aquaporin (TC 1.A.8) family. In terms of assembly, homotetramer; each monomer provides an independent solute pore.

The protein localises to the cytoplasmic vesicle membrane. It carries out the reaction nitrate(in) = nitrate(out). The catalysed reaction is iodide(out) = iodide(in). It catalyses the reaction bromide(in) = bromide(out). The enzyme catalyses chloride(in) = chloride(out). It carries out the reaction Na(+)(in) = Na(+)(out). The catalysed reaction is H2O(in) = H2O(out). It catalyses the reaction CO2(out) = CO2(in). The enzyme catalyses NH4(+)(in) = NH4(+)(out). Aquaporins form homotetrameric transmembrane channels, with each monomer independently mediating water transport across the plasma membrane along its osmotic gradient. Unlike classical aquaporins, AQP6 is an intracellular channel with selective anion permeability, particularly for nitrate, and exhibits very low water permeability. It may also facilitate the transport of gases, such as CO2 and NH4(+), as demonstrated in vitro. This chain is Aquaporin-6, found in Homo sapiens (Human).